The sequence spans 85 residues: Sec-independent protein translocase protein TatA (85 aa).

The helical transmembrane segment at 1 to 21 (MGIFDWKHWLIILIVVVLVFG) threads the bilayer. The tract at residues 43–85 (VNTEEGENRPAEPQTGTSAGDTLNKTQTIEGQAQKVDTPVRKD) is disordered. Residues 56–73 (QTGTSAGDTLNKTQTIEG) are compositionally biased toward polar residues.

It belongs to the TatA/E family. The Tat system comprises two distinct complexes: a TatABC complex, containing multiple copies of TatA, TatB and TatC subunits, and a separate TatA complex, containing only TatA subunits. Substrates initially bind to the TatABC complex, which probably triggers association of the separate TatA complex to form the active translocon.

The protein resides in the cell inner membrane. Part of the twin-arginine translocation (Tat) system that transports large folded proteins containing a characteristic twin-arginine motif in their signal peptide across membranes. TatA could form the protein-conducting channel of the Tat system. In Azotobacter vinelandii (strain DJ / ATCC BAA-1303), this protein is Sec-independent protein translocase protein TatA.